The following is a 133-amino-acid chain: Holo-[acyl-carrier-protein] synthase (133 aa).

Positions 8 and 56 each coordinate Mg(2+).

Belongs to the P-Pant transferase superfamily. AcpS family. Requires Mg(2+) as cofactor.

The protein resides in the cytoplasm. It catalyses the reaction apo-[ACP] + CoA = holo-[ACP] + adenosine 3',5'-bisphosphate + H(+). Functionally, transfers the 4'-phosphopantetheine moiety from coenzyme A to a Ser of acyl-carrier-protein. The polypeptide is Holo-[acyl-carrier-protein] synthase (Clostridium perfringens (strain SM101 / Type A)).